The primary structure comprises 272 residues: 3-methyl-2-oxobutanoate hydroxymethyltransferase (272 aa).

Positions 42 and 86 each coordinate Mg(2+). 3-methyl-2-oxobutanoate is bound by residues 42–43 (DS), Asp-86, and Lys-116. Glu-118 contacts Mg(2+). Catalysis depends on Glu-185, which acts as the Proton acceptor.

The protein belongs to the PanB family. Homodecamer; pentamer of dimers. The cofactor is Mg(2+).

The protein resides in the cytoplasm. The enzyme catalyses 3-methyl-2-oxobutanoate + (6R)-5,10-methylene-5,6,7,8-tetrahydrofolate + H2O = 2-dehydropantoate + (6S)-5,6,7,8-tetrahydrofolate. Its pathway is cofactor biosynthesis; (R)-pantothenate biosynthesis; (R)-pantoate from 3-methyl-2-oxobutanoate: step 1/2. Its function is as follows. Catalyzes the reversible reaction in which hydroxymethyl group from 5,10-methylenetetrahydrofolate is transferred onto alpha-ketoisovalerate to form ketopantoate. The protein is 3-methyl-2-oxobutanoate hydroxymethyltransferase of Prochlorococcus marinus (strain MIT 9303).